Reading from the N-terminus, the 891-residue chain is Alanine--tRNA ligase (891 aa).

His564, His568, Cys678, and His682 together coordinate Zn(2+).

This sequence belongs to the class-II aminoacyl-tRNA synthetase family. Zn(2+) is required as a cofactor.

It localises to the cytoplasm. The enzyme catalyses tRNA(Ala) + L-alanine + ATP = L-alanyl-tRNA(Ala) + AMP + diphosphate. Functionally, catalyzes the attachment of alanine to tRNA(Ala) in a two-step reaction: alanine is first activated by ATP to form Ala-AMP and then transferred to the acceptor end of tRNA(Ala). Also edits incorrectly charged Ser-tRNA(Ala) and Gly-tRNA(Ala) via its editing domain. This Nitrobacter winogradskyi (strain ATCC 25391 / DSM 10237 / CIP 104748 / NCIMB 11846 / Nb-255) protein is Alanine--tRNA ligase.